A 209-amino-acid polypeptide reads, in one-letter code: D-aminoacyl-tRNA deacylase 1 (209 aa).

Residues valine 4, glutamine 6, and cysteine 28 each contribute to the Mg(2+) site. The Gly-cisPro motif, important for rejection of L-amino acids signature appears at 139–140 (GP). Positions 142–209 (TIELESPAPG…EGDVSSEREP (68 aa)) are disordered. 2 stretches are compositionally biased toward basic and acidic residues: residues 159–170 (QLSKLEKQQQRK) and 181–194 (SSKE…EDRS). 3 positions are modified to phosphoserine: serine 197, serine 204, and serine 205.

The protein belongs to the DTD family. As to quaternary structure, homodimer. Interacts with CDC45 and TOPBP1. In terms of processing, preferentially phosphorylated in cells arrested early in S phase. Phosphorylation in the C-terminus weakens the interaction with CDC45.

The protein resides in the nucleus. The protein localises to the cytoplasm. The catalysed reaction is glycyl-tRNA(Ala) + H2O = tRNA(Ala) + glycine + H(+). It catalyses the reaction a D-aminoacyl-tRNA + H2O = a tRNA + a D-alpha-amino acid + H(+). In terms of biological role, an aminoacyl-tRNA editing enzyme that deacylates mischarged D-aminoacyl-tRNAs. Also deacylates mischarged glycyl-tRNA(Ala), protecting cells against glycine mischarging by AlaRS. Acts via tRNA-based rather than protein-based catalysis; rejects L-amino acids rather than detecting D-amino acids in the active site. By recycling D-aminoacyl-tRNA to D-amino acids and free tRNA molecules, this enzyme counteracts the toxicity associated with the formation of D-aminoacyl-tRNA entities in vivo and helps enforce protein L-homochirality. Functionally, ATPase involved in DNA replication, may facilitate loading of CDC45 onto pre-replication complexes. The polypeptide is D-aminoacyl-tRNA deacylase 1 (DTD1) (Bos taurus (Bovine)).